A 235-amino-acid polypeptide reads, in one-letter code: Carboxy-S-adenosyl-L-methionine synthase (235 aa).

S-adenosyl-L-methionine is bound by residues Y35, 60–62, 83–84, N124, and R191; these read GCS and DN.

The protein belongs to the class I-like SAM-binding methyltransferase superfamily. Cx-SAM synthase family. Homodimer.

The catalysed reaction is prephenate + S-adenosyl-L-methionine = carboxy-S-adenosyl-L-methionine + 3-phenylpyruvate + H2O. In terms of biological role, catalyzes the conversion of S-adenosyl-L-methionine (SAM) to carboxy-S-adenosyl-L-methionine (Cx-SAM). This is Carboxy-S-adenosyl-L-methionine synthase from Campylobacter jejuni subsp. jejuni serotype O:23/36 (strain 81-176).